Consider the following 2641-residue polypeptide: Inverse autotransporter adhesin YeeJ (2641 aa).

The signal sequence occupies residues methionine 1–alanine 26. One can recognise a LysM domain in the interval valine 50–valine 98. The disordered stretch occupies residues proline 99 to leucine 118. Residues threonine 125–asparagine 400 form an inverse autotransporter region. The tract at residues glutamine 513–valine 605 is invasin 3 domain. Big-1 domains are found at residues histidine 617–isoleucine 711, isoleucine 721–valine 815, glutamine 822–isoleucine 913, alanine 920–valine 1017, valine 1024–alanine 1116, glutamine 1123–valine 1220, valine 1227–alanine 1319, glutamine 1326–valine 1423, glutamine 1430–isoleucine 1523, isoleucine 1531–valine 1633, histidine 1641–valine 1734, glutamate 1741–threonine 1837, glutamine 1844–isoleucine 1941, lysine 1948–valine 2032, phenylalanine 2048–isoleucine 2139, lysine 2142–threonine 2236, and valine 2244–valine 2336. The tract at residues lysine 2538–leucine 2641 is C-type lectin domain.

Belongs to the intimin/invasin family.

Its subcellular location is the cell outer membrane. A probable inverse autotransporter, it may be involved in biofilm formation and cell adhesion. May bind peptidoglycan via its LysM domain. Upon overexpression shows increased mature biofilm formation. This is Inverse autotransporter adhesin YeeJ from Escherichia coli O17:K52:H18 (strain UMN026 / ExPEC).